We begin with the raw amino-acid sequence, 65 residues long: Large ribosomal subunit protein bL35 (65 aa).

Positions 1-15 (MPKMKTKKSASKRFQ) are enriched in basic residues. The disordered stretch occupies residues 1–27 (MPKMKTKKSASKRFQVRGSGSIKRGQA).

It belongs to the bacterial ribosomal protein bL35 family.

The polypeptide is Large ribosomal subunit protein bL35 (Bordetella petrii (strain ATCC BAA-461 / DSM 12804 / CCUG 43448)).